We begin with the raw amino-acid sequence, 395 residues long: Succinyl-diaminopimelate desuccinylase (395 aa).

His74 is a Zn(2+) binding site. Asp76 is an active-site residue. Asp107 contacts Zn(2+). The Proton acceptor role is filled by Glu141. Glu142, Glu170, and His368 together coordinate Zn(2+).

This sequence belongs to the peptidase M20A family. DapE subfamily. In terms of assembly, homodimer. The cofactor is Zn(2+). Co(2+) serves as cofactor.

It carries out the reaction N-succinyl-(2S,6S)-2,6-diaminopimelate + H2O = (2S,6S)-2,6-diaminopimelate + succinate. The protein operates within amino-acid biosynthesis; L-lysine biosynthesis via DAP pathway; LL-2,6-diaminopimelate from (S)-tetrahydrodipicolinate (succinylase route): step 3/3. Functionally, catalyzes the hydrolysis of N-succinyl-L,L-diaminopimelic acid (SDAP), forming succinate and LL-2,6-diaminopimelate (DAP), an intermediate involved in the bacterial biosynthesis of lysine and meso-diaminopimelic acid, an essential component of bacterial cell walls. This is Succinyl-diaminopimelate desuccinylase from Chelativorans sp. (strain BNC1).